Consider the following 265-residue polypeptide: Undecaprenyl-diphosphatase (265 aa).

7 helical membrane-spanning segments follow: residues 42–62 (AATFDVVIQLGAIMAVVVLYW), 82–102 (GIVLLMLTSLPACILGLLLHA), 108–128 (LFRPATVLIALVVGAICMILV), 157–177 (LALWPGFSRSAATIMGGMLLG), 181–201 (PLAAEYSFIAAVPIMVAATGY), 217–237 (FFLVGMIGSFVSALLAVKVFV), and 244–264 (TLIPFACYRLLIAPFVYYFMV).

Belongs to the UppP family.

Its subcellular location is the cell inner membrane. It carries out the reaction di-trans,octa-cis-undecaprenyl diphosphate + H2O = di-trans,octa-cis-undecaprenyl phosphate + phosphate + H(+). Functionally, catalyzes the dephosphorylation of undecaprenyl diphosphate (UPP). Confers resistance to bacitracin. In Desulfovibrio desulfuricans (strain ATCC 27774 / DSM 6949 / MB), this protein is Undecaprenyl-diphosphatase.